We begin with the raw amino-acid sequence, 805 residues long: Arginine/serine-rich protein PNISR (805 aa).

The segment covering 75–88 (NNHGNFQGDSNFNR) has biased composition (polar residues). Disordered regions lie at residues 75 to 331 (NNHG…EEKE) and 382 to 805 (LTGL…SRSR). 2 stretches are compositionally biased toward pro residues: residues 100-115 (PPHP…PAPG) and 183-194 (YWQPGPPGPPAP). A compositionally biased stretch (basic and acidic residues) spans 197–210 (NRRERPPSFRDRQR). Phosphoserine is present on residues serine 204 and serine 211. Residue lysine 218 forms a Glycyl lysine isopeptide (Lys-Gly) (interchain with G-Cter in SUMO2) linkage. A coiled-coil region spans residues 237–276 (REGLEKMEREKQKKLEKERMEQQRSQLSKKEKKATEDAEG). The segment covering 238-258 (EGLEKMEREKQKKLEKERMEQ) has biased composition (basic and acidic residues). Phosphoserine is present on residues serine 290, serine 304, serine 313, and serine 321. The span at 290–299 (SDEEDEDAEN) shows a compositional bias: acidic residues. Positions 384–393 (GLGGLGGYGS) are enriched in gly residues. The segment covering 421 to 463 (QKQEAFWRKEKEQQLLQDKQIEEEKQQTERVTKEMNEFIHREQ) has biased composition (basic and acidic residues). Residues 427–461 (WRKEKEQQLLQDKQIEEEKQQTERVTKEMNEFIHR) adopt a coiled-coil conformation. A phosphoserine mark is found at serine 465 and serine 467. 2 stretches are compositionally biased toward basic and acidic residues: residues 473 to 486 (EADR…KRTP) and 494 to 508 (EPKR…ERGS). A Phosphothreonine modification is found at threonine 485. Residue lysine 496 forms a Glycyl lysine isopeptide (Lys-Gly) (interchain with G-Cter in SUMO2) linkage. Residues 509-550 (RSGSSSSGSSSSGSRTSSSSSSVSSSSYSSSSGSSCTSSRSS) are compositionally biased toward low complexity. Composition is skewed to basic residues over residues 551–560 (SPKRRKRPSR), 567–579 (KARR…YSRR), 587–598 (TRGKLRDRRRSN), and 607–639 (RRNR…SRDR). The segment covering 659–721 (EAKEQDRKKE…KRKRESERTF (63 aa)) has biased composition (basic and acidic residues). A Glycyl lysine isopeptide (Lys-Gly) (interchain with G-Cter in SUMO2) cross-link involves residue lysine 703. Serine 726 carries the phosphoserine modification. Residues 732 to 753 (IRHDSRQDSKKNATKDSKRHSG) show a composition bias toward basic and acidic residues. The segment covering 754–767 (SDSSGRSSSESPGS) has biased composition (low complexity). Basic residues-rich tracts occupy residues 771–781 (KKAKKPKHSRS) and 789–805 (RSGK…SRSR).

It belongs to the splicing factor SR family. In terms of assembly, interacts with PNN.

It localises to the nucleus speckle. This is Arginine/serine-rich protein PNISR (Pnisr) from Mus musculus (Mouse).